The primary structure comprises 355 residues: Protein RecA (355 aa).

Position 69–76 (69–76) interacts with ATP; the sequence is GPESSGKT. The disordered stretch occupies residues 329–355; that stretch reads AYGLPDREETKREETAQIPDTEKTKDV.

It belongs to the RecA family.

It is found in the cytoplasm. Functionally, can catalyze the hydrolysis of ATP in the presence of single-stranded DNA, the ATP-dependent uptake of single-stranded DNA by duplex DNA, and the ATP-dependent hybridization of homologous single-stranded DNAs. It interacts with LexA causing its activation and leading to its autocatalytic cleavage. This is Protein RecA from Desulfotalea psychrophila (strain LSv54 / DSM 12343).